The following is a 174-amino-acid chain: Co-chaperone protein HscB homolog (174 aa).

Residues 2-74 (NYFNLFNFTP…LRRAEHLLSL (73 aa)) enclose the J domain.

Belongs to the HscB family. Interacts with HscA and stimulates its ATPase activity.

Its function is as follows. Co-chaperone involved in the maturation of iron-sulfur cluster-containing proteins. Seems to help targeting proteins to be folded toward HscA. The polypeptide is Co-chaperone protein HscB homolog (Shewanella denitrificans (strain OS217 / ATCC BAA-1090 / DSM 15013)).